A 608-amino-acid chain; its full sequence is MSHFPKLLSSQIAFDVARTMLDGFDKHYRLFREVSRQAKVKFEAGDWHSLQQMQRDRIAFYNERVRETSVILEDEYDAENIEDEIWQQIKLHYIGLLTNHHQPELAETFFNSVCTRLLHRSYFNNDFIFVRPAISTEYIENEESPTRPTFRAYYPGSRQGMAECFERIVHNFQLETPFEDLRRDVGHVVRGVEEHFGDFRIAPNFQIHVLSSLFFRNKTAFIIGRIVNADRTYPLAIPIVHGPSGKLTLDAVLLKKVQVLILFSFTHSYFMVDMEIPSAYVTFLRDIMPRKPRAEIYTSLGLQKQGKNLFYRDFLHHLQHSSDKFISAPGIKGLVMLVFTLPSYPYVFKVIKDFYPAPKETTRELIKSKYQLVKQHDRVGRMADTLEYSNVAFPLSRFDEDLVRELEHHAPSMIEYQRGKDGGEEIVVRHVYIERRMTPLNIWLQEGTDEQLEHGIIEYGNAIKELIAANIFPGDMLYKNFGVTRHGRVVFYDYDEIEYFTDCNVRRVPQPRNEEEEMSGDIWYTVRPHDIFPETFRTFLLGNPRVREAFLRHHEDLFDPAMWQSHKDRLLAGHVHDFFAYPISERFINRYGTAAHGTPVASFARRVA.

Residues 328–334 (APGIKGL) and K349 contribute to the ATP site. D384 is a catalytic residue.

This sequence belongs to the AceK family.

The protein localises to the cytoplasm. The enzyme catalyses L-seryl-[isocitrate dehydrogenase] + ATP = O-phospho-L-seryl-[isocitrate dehydrogenase] + ADP + H(+). Bifunctional enzyme which can phosphorylate or dephosphorylate isocitrate dehydrogenase (IDH) on a specific serine residue. This is a regulatory mechanism which enables bacteria to bypass the Krebs cycle via the glyoxylate shunt in response to the source of carbon. When bacteria are grown on glucose, IDH is fully active and unphosphorylated, but when grown on acetate or ethanol, the activity of IDH declines drastically concomitant with its phosphorylation. This chain is Isocitrate dehydrogenase kinase/phosphatase, found in Cupriavidus pinatubonensis (strain JMP 134 / LMG 1197) (Cupriavidus necator (strain JMP 134)).